The primary structure comprises 429 residues: Histidine--tRNA ligase (429 aa).

Belongs to the class-II aminoacyl-tRNA synthetase family. In terms of assembly, homodimer.

The protein localises to the cytoplasm. It carries out the reaction tRNA(His) + L-histidine + ATP = L-histidyl-tRNA(His) + AMP + diphosphate + H(+). This chain is Histidine--tRNA ligase, found in Chlorobium phaeobacteroides (strain DSM 266 / SMG 266 / 2430).